The chain runs to 342 residues: Ornithine carbamoyltransferase, catabolic (342 aa).

Residues 59–62 (STRT), Ser83, Arg110, and 137–140 (HPTQ) each bind carbamoyl phosphate. L-ornithine is bound by residues Asn169, Asp235, and 239–240 (SL). Residues 276-277 (CL) and Arg328 contribute to the carbamoyl phosphate site.

The protein belongs to the aspartate/ornithine carbamoyltransferase superfamily. OTCase family. Dodecamer (tetramer of trimers).

It is found in the cytoplasm. It catalyses the reaction carbamoyl phosphate + L-ornithine = L-citrulline + phosphate + H(+). Its pathway is amino-acid degradation; L-arginine degradation via ADI pathway; carbamoyl phosphate from L-arginine: step 2/2. Its function is as follows. nvolved in the catabolism of arginine. Catalyzes the phosphorolysis of citrulline, the reverse reaction of the biosynthetic one, yielding ornithine and carbamoyl phosphate which serve to generate ATP from ADP. The chain is Ornithine carbamoyltransferase, catabolic (arcB) from Malacoplasma penetrans (strain HF-2) (Mycoplasma penetrans).